We begin with the raw amino-acid sequence, 484 residues long: TPR repeat-containing protein YvcD (484 aa).

3 TPR repeats span residues 21–54 (GQYF…EPED), 55–88 (SEML…LEAE), and 187–220 (WSAY…NEGN).

This Bacillus subtilis (strain 168) protein is TPR repeat-containing protein YvcD (yvcD).